The following is a 142-amino-acid chain: Phenylalanine ammonia-lyase (142 aa).

(E)-cinnamate-binding residues include K66, E94, and N97.

It belongs to the PAL/histidase family. Homotetramer. In terms of processing, contains an active site 4-methylidene-imidazol-5-one (MIO), which is formed autocatalytically by cyclization and dehydration of residues Ala-Ser-Gly.

It is found in the cytoplasm. It catalyses the reaction L-phenylalanine = (E)-cinnamate + NH4(+). It participates in phenylpropanoid metabolism; trans-cinnamate biosynthesis; trans-cinnamate from L-phenylalanine: step 1/1. In terms of biological role, catalyzes the non-oxidative deamination of L-phenylalanine to form trans-cinnamic acid and a free ammonium ion. Facilitates the commitment step in phenylpropanoid pathways that produce secondary metabolites such as lignins, coumarins and flavonoids. This is Phenylalanine ammonia-lyase (palA) from Agaricus bisporus (White button mushroom).